Reading from the N-terminus, the 451-residue chain is UDP-N-acetylmuramoylalanine--D-glutamate ligase (451 aa).

Position 119 to 125 (119 to 125 (GSNGKTT)) interacts with ATP.

This sequence belongs to the MurCDEF family.

It is found in the cytoplasm. The catalysed reaction is UDP-N-acetyl-alpha-D-muramoyl-L-alanine + D-glutamate + ATP = UDP-N-acetyl-alpha-D-muramoyl-L-alanyl-D-glutamate + ADP + phosphate + H(+). The protein operates within cell wall biogenesis; peptidoglycan biosynthesis. Its function is as follows. Cell wall formation. Catalyzes the addition of glutamate to the nucleotide precursor UDP-N-acetylmuramoyl-L-alanine (UMA). This chain is UDP-N-acetylmuramoylalanine--D-glutamate ligase, found in Geobacillus sp. (strain WCH70).